The primary structure comprises 315 residues: Eukaryotic translation initiation factor 2 subunit 1 (315 aa).

The S1 motif domain occupies 17-88 (EDVVMVNVRS…EKGYIDLSKR (72 aa)). Residues S49 and S52 each carry the phosphoserine modification. Positions 292–315 (RLERENAEVDGDDDAEEMEAKTED) are disordered. Residues 299 to 308 (EVDGDDDAEE) show a composition bias toward acidic residues.

The protein belongs to the eIF-2-alpha family. Eukaryotic translation initiation factor 2 eIF2 is a heterotrimeric complex composed of an alpha (EIF2S1), a beta (EIF2S2) and a gamma (EIF2S3) chain. In terms of processing, phosphorylation at Ser-49 and Ser-52 stabilizes the eIF-2/GDP/eIF2B complex and prevents GDP/GTP exchange reaction, thus impairing the recycling of eIF-2 between successive rounds of initiation and leading to global inhibition of translation, while concomitantly initiating the preferential translation of integrated stress response (ISR)-specific mRNAs.

It is found in the cytoplasm. Its subcellular location is the stress granule. The protein resides in the cytosol. With respect to regulation, activity is regulated by phosphorylation at Ser-49 and Ser-52, which stabilizes the eIF2/GDP/eIF2B complex and prevents the eIF2B-mediated exchange of GDP for GTP, thereby preventing the formation of the 43S pre-initiation complex (43S PIC). This results in the global attenuation of 5' cap-dependent protein synthesis and concomitant translation of ISR-specific mRNAs that contain a short upstream open reading frame (uORF) in their 5' UTR. In terms of biological role, member of the eIF2 complex that functions in the early steps of protein synthesis by forming a ternary complex with GTP and initiator tRNA. This complex binds to a 40S ribosomal subunit, followed by mRNA binding to form a 43S pre-initiation complex. Junction of the 60S ribosomal subunit to form the 80S initiation complex is preceded by hydrolysis of the GTP bound to eIF2 and release of an eIF2-GDP binary complex. In order for eIF2 to recycle and catalyze another round of initiation, the GDP bound to eIF2 must exchange with GTP by way of a reaction catalyzed by eIF2B. EIF2S1/eIF2-alpha is a key component of the integrated stress response (ISR), required for adaptation to various stress: phosphorylation by metabolic-stress sensing protein kinases (EIF2AK1/HRI, EIF2AK2/PKR, EIF2AK3/PERK and EIF2AK4/GCN2) in response to stress converts EIF2S1/eIF2-alpha in a global protein synthesis inhibitor, leading to a attenuation of cap-dependent translation, while concomitantly initiating the preferential translation of ISR-specific mRNAs, such as the transcriptional activators ATF4 and QRICH1. This Gallus gallus (Chicken) protein is Eukaryotic translation initiation factor 2 subunit 1 (EIF2S1).